A 550-amino-acid chain; its full sequence is Zorya protein ZorA (550 aa).

The next 3 helical transmembrane spans lie at T16–C36, L52–F72, and F92–F112.

Belongs to the MotA family.

The protein resides in the cell inner membrane. Its function is as follows. Component of antiviral defense system Zorya type II, composed of ZorA, ZorB and ZorE. Expression of Zorya type II in E.coli (strain MG1655) confers resistance to phages SECphi7 and T7. While most T7 infected Zorya-containing cells undergo abortive infection, a minority produce viable phage progeny. These eventually accumulate to a high multiplicity of infection, leading to culture collapse by 170 minutes after initial infection. ZorA and ZorB probably assemble in the cell inner membrane and exert their effect there. The sequence is that of Zorya protein ZorA from Escherichia coli (strain ATCC 8739 / DSM 1576 / NBRC 3972 / NCIMB 8545 / WDCM 00012 / Crooks).